A 376-amino-acid chain; its full sequence is Pyrimidine monooxygenase RutA (376 aa).

Residues 61–62 (IK), Asn127, Glu136, 152–153 (RY), and Ser202 contribute to the FMN site.

Belongs to the NtaA/SnaA/DszA monooxygenase family. RutA subfamily.

The enzyme catalyses uracil + FMNH2 + NADH + O2 = (Z)-3-ureidoacrylate + FMN + NAD(+) + H2O + H(+). It catalyses the reaction thymine + FMNH2 + NADH + O2 = (Z)-2-methylureidoacrylate + FMN + NAD(+) + H2O + H(+). In terms of biological role, catalyzes the pyrimidine ring opening between N-3 and C-4 by an unusual flavin hydroperoxide-catalyzed mechanism, adding oxygen atoms in the process to yield ureidoacrylate peracid, that immediately reacts with FMN forming ureidoacrylate and FMN-N(5)-oxide. The FMN-N(5)-oxide reacts spontaneously with NADH to produce FMN. Requires the flavin reductase RutF to regenerate FMN in vivo. This chain is Pyrimidine monooxygenase RutA, found in Methylorubrum populi (strain ATCC BAA-705 / NCIMB 13946 / BJ001) (Methylobacterium populi).